The following is a 95-amino-acid chain: Sec-independent protein translocase protein TatA (95 aa).

The chain crosses the membrane as a helical span at residues 1–21; sequence MGSMSVWHWVIVAVVVMLLFG. Residues 42 to 95 are disordered; that stretch reads GMADDETQPNTATSVPPVGPNDPVRTLPHQGAPGTAPQPPHVQPHVPAGDHKAV.

The protein belongs to the TatA/E family. As to quaternary structure, the Tat system comprises two distinct complexes: a TatABC complex, containing multiple copies of TatA, TatB and TatC subunits, and a separate TatA complex, containing only TatA subunits. Substrates initially bind to the TatABC complex, which probably triggers association of the separate TatA complex to form the active translocon.

The protein resides in the cell inner membrane. In terms of biological role, part of the twin-arginine translocation (Tat) system that transports large folded proteins containing a characteristic twin-arginine motif in their signal peptide across membranes. TatA could form the protein-conducting channel of the Tat system. The chain is Sec-independent protein translocase protein TatA from Methylorubrum extorquens (strain PA1) (Methylobacterium extorquens).